The following is a 377-amino-acid chain: Glutamate 5-kinase (377 aa).

Lys-20 is a binding site for ATP. Positions 59, 146, and 158 each coordinate substrate. ATP is bound by residues 178-179 (SD) and 220-226 (TGGMSTK). The region spanning 285–363 (RGTLTVDAGA…ADIEAVLGYR (79 aa)) is the PUA domain.

This sequence belongs to the glutamate 5-kinase family.

Its subcellular location is the cytoplasm. The catalysed reaction is L-glutamate + ATP = L-glutamyl 5-phosphate + ADP. Its pathway is amino-acid biosynthesis; L-proline biosynthesis; L-glutamate 5-semialdehyde from L-glutamate: step 1/2. In terms of biological role, catalyzes the transfer of a phosphate group to glutamate to form L-glutamate 5-phosphate. The sequence is that of Glutamate 5-kinase from Myxococcus xanthus (strain DK1622).